Here is a 122-residue protein sequence, read N- to C-terminus: Large ribosomal subunit protein uL14c (122 aa).

The protein belongs to the universal ribosomal protein uL14 family. In terms of assembly, part of the 50S ribosomal subunit.

The protein resides in the plastid. It is found in the chloroplast. Functionally, binds to 23S rRNA. The protein is Large ribosomal subunit protein uL14c of Anthoceros angustus (Hornwort).